A 2236-amino-acid polypeptide reads, in one-letter code: uncharacterized protein (2236 aa).

Spectrin repeat units follow at residues 46 to 146 (QVYL…RQLE) and 238 to 335 (QKFV…TDIE). Coiled-coil stretches lie at residues 496–541 (VVEQ…TVNS) and 603–631 (DDQQ…VGRQ). Spectrin repeat units lie at residues 839-949 (YEYD…KTLK), 1048-1146 (KKLE…KRME), 1261-1361 (LGAE…VDLN), 1367-1459 (ILID…KSLA), and 1562-1667 (QKVV…NRLE). The stretch at 1835–1869 (QNSTDAEKKLSLVSERLNALKKQLDLLAEKIAVDD) forms a coiled coil. 2 consecutive EF-hand domains span residues 2104–2139 (KQLH…QGYN) and 2141–2176 (SAEN…HETT). The Ca(2+) site is built by Asp-2154, Ser-2156, Thr-2158, His-2160, and Asp-2165.

It belongs to the spectrin family.

This is an uncharacterized protein from Caenorhabditis elegans.